The primary structure comprises 295 residues: Proline iminopeptidase (295 aa).

Residues 35-279 enclose the AB hydrolase-1 domain; the sequence is TLHGGPGMSH…ACSHLTMWED (245 aa). Ser-107 (nucleophile) is an active-site residue. Residue Asp-246 is part of the active site. His-273 (proton donor) is an active-site residue.

The protein belongs to the peptidase S33 family. In terms of assembly, part of the tricorn proteolytic complex.

The enzyme catalyses Release of N-terminal proline from a peptide.. Its function is as follows. Cleaves H-Pro-AMC as well as a wide spectrum of amino acid substrates and several peptide substrates without a proline at the N-terminus. In conjunction with the three factors F1, F2 and F3, Tricorn degrades oligopeptides in a sequential manner, yielding free amino acids. The chain is Proline iminopeptidase (pip) from Thermoplasma volcanium (strain ATCC 51530 / DSM 4299 / JCM 9571 / NBRC 15438 / GSS1).